An 838-amino-acid chain; its full sequence is 1,4-alpha-glucan branching enzyme GlgB 1 (838 aa).

Residues 1–11 show a composition bias toward basic and acidic residues; sequence MIPRPPSDDRA. 2 disordered regions span residues 1 to 98 and 116 to 142; these read MIPR…VSKK and PVSPAVAPDDRDRLLSGTHHAPHSVLG. Low complexity predominate over residues 29–57; that stretch reads KKAAAAKKTAGKKATPAAKATAAKGAVTK. Aspartate 513 serves as the catalytic Nucleophile. Glutamate 566 (proton donor) is an active-site residue. The interval 793–822 is disordered; that stretch reads TDGARYGGSDVTNPHPVKPEPQGRHGRPAS.

Belongs to the glycosyl hydrolase 13 family. GlgB subfamily. Monomer.

The catalysed reaction is Transfers a segment of a (1-&gt;4)-alpha-D-glucan chain to a primary hydroxy group in a similar glucan chain.. Its pathway is glycan biosynthesis; glycogen biosynthesis. Catalyzes the formation of the alpha-1,6-glucosidic linkages in glycogen by scission of a 1,4-alpha-linked oligosaccharide from growing alpha-1,4-glucan chains and the subsequent attachment of the oligosaccharide to the alpha-1,6 position. This chain is 1,4-alpha-glucan branching enzyme GlgB 1, found in Streptomyces avermitilis (strain ATCC 31267 / DSM 46492 / JCM 5070 / NBRC 14893 / NCIMB 12804 / NRRL 8165 / MA-4680).